The following is a 93-amino-acid chain: MLNVNEYFEGQVKSIGFEAQGDRTSVGVMAAGEYTFGTAAPERMTVVKGSMDVKRPGHVEWETFNAGDDFEVPGDSSFEVKITSSTAYLCDYL.

The protein belongs to the nucleoside phosphorylase PpnP family.

The catalysed reaction is a purine D-ribonucleoside + phosphate = a purine nucleobase + alpha-D-ribose 1-phosphate. It carries out the reaction adenosine + phosphate = alpha-D-ribose 1-phosphate + adenine. The enzyme catalyses cytidine + phosphate = cytosine + alpha-D-ribose 1-phosphate. It catalyses the reaction guanosine + phosphate = alpha-D-ribose 1-phosphate + guanine. The catalysed reaction is inosine + phosphate = alpha-D-ribose 1-phosphate + hypoxanthine. It carries out the reaction thymidine + phosphate = 2-deoxy-alpha-D-ribose 1-phosphate + thymine. The enzyme catalyses uridine + phosphate = alpha-D-ribose 1-phosphate + uracil. It catalyses the reaction xanthosine + phosphate = alpha-D-ribose 1-phosphate + xanthine. In terms of biological role, catalyzes the phosphorolysis of diverse nucleosides, yielding D-ribose 1-phosphate and the respective free bases. Can use uridine, adenosine, guanosine, cytidine, thymidine, inosine and xanthosine as substrates. Also catalyzes the reverse reactions. This is Pyrimidine/purine nucleoside phosphorylase from Photobacterium profundum (strain SS9).